Here is a 209-residue protein sequence, read N- to C-terminus: COP9 signalosome complex subunit 8 (209 aa).

A PCI domain is found at 8–179; the sequence is ESAFSFKKLL…GALDVSFNKF (172 aa). Ser-175 bears the Phosphoserine mark.

This sequence belongs to the CSN8 family. As to quaternary structure, component of the CSN complex, composed of COPS1/GPS1, COPS2, COPS3, COPS4, COPS5, COPS6, COPS7 (COPS7A or COPS7B), COPS8 and COPS9. In the complex, it probably interacts directly with COPS3, COPS4 and COPS7 (COPS7A or COPS7B).

The protein resides in the cytoplasm. It is found in the nucleus. Component of the COP9 signalosome complex (CSN), a complex involved in various cellular and developmental processes. The CSN complex is an essential regulator of the ubiquitin (Ubl) conjugation pathway by mediating the deneddylation of the cullin subunits of SCF-type E3 ligase complexes, leading to decrease the Ubl ligase activity of SCF-type complexes such as SCF, CSA or DDB2. The complex is also involved in phosphorylation of p53/TP53, c-jun/JUN, IkappaBalpha/NFKBIA, ITPK1 and IRF8/ICSBP, possibly via its association with CK2 and PKD kinases. CSN-dependent phosphorylation of TP53 and JUN promotes and protects degradation by the Ubl system, respectively. The chain is COP9 signalosome complex subunit 8 (COPS8) from Pongo abelii (Sumatran orangutan).